Reading from the N-terminus, the 156-residue chain is Ribosomal RNA large subunit methyltransferase H (156 aa).

S-adenosyl-L-methionine is bound by residues L72, G103, and 122–127; that span reads LSSLTL.

It belongs to the RNA methyltransferase RlmH family. In terms of assembly, homodimer.

The protein resides in the cytoplasm. It catalyses the reaction pseudouridine(1915) in 23S rRNA + S-adenosyl-L-methionine = N(3)-methylpseudouridine(1915) in 23S rRNA + S-adenosyl-L-homocysteine + H(+). In terms of biological role, specifically methylates the pseudouridine at position 1915 (m3Psi1915) in 23S rRNA. This Dechloromonas aromatica (strain RCB) protein is Ribosomal RNA large subunit methyltransferase H.